The following is a 411-amino-acid chain: Glutamyl-tRNA reductase (411 aa).

Substrate-binding positions include 49-52 (TCNR), serine 99, 104-106 (ENE), and glutamine 110. Cysteine 50 (nucleophile) is an active-site residue. 179-184 (GAGEAG) serves as a coordination point for NADP(+).

The protein belongs to the glutamyl-tRNA reductase family. In terms of assembly, homodimer.

It catalyses the reaction (S)-4-amino-5-oxopentanoate + tRNA(Glu) + NADP(+) = L-glutamyl-tRNA(Glu) + NADPH + H(+). It functions in the pathway porphyrin-containing compound metabolism; protoporphyrin-IX biosynthesis; 5-aminolevulinate from L-glutamyl-tRNA(Glu): step 1/2. Its function is as follows. Catalyzes the NADPH-dependent reduction of glutamyl-tRNA(Glu) to glutamate 1-semialdehyde (GSA). The protein is Glutamyl-tRNA reductase of Hyperthermus butylicus (strain DSM 5456 / JCM 9403 / PLM1-5).